Reading from the N-terminus, the 293-residue chain is Diaminopimelate epimerase (293 aa).

Substrate is bound by residues N15, Q47, and N67. The active-site Proton donor is the C76. Residues 77–78 (GN), N163, N197, and 215–216 (ER) each bind substrate. C224 (proton acceptor) is an active-site residue. Position 225 to 226 (225 to 226 (GS)) interacts with substrate.

The protein belongs to the diaminopimelate epimerase family. Homodimer.

The protein localises to the cytoplasm. It catalyses the reaction (2S,6S)-2,6-diaminopimelate = meso-2,6-diaminopimelate. The protein operates within amino-acid biosynthesis; L-lysine biosynthesis via DAP pathway; DL-2,6-diaminopimelate from LL-2,6-diaminopimelate: step 1/1. Catalyzes the stereoinversion of LL-2,6-diaminopimelate (L,L-DAP) to meso-diaminopimelate (meso-DAP), a precursor of L-lysine and an essential component of the bacterial peptidoglycan. This Chelativorans sp. (strain BNC1) protein is Diaminopimelate epimerase.